We begin with the raw amino-acid sequence, 261 residues long: Glucosamine-6-phosphate deaminase (261 aa).

The active-site Proton acceptor; for enolization step is the aspartate 67. The active-site For ring-opening step is the aspartate 136. The Proton acceptor; for ring-opening step role is filled by histidine 138. Glutamate 143 functions as the For ring-opening step in the catalytic mechanism.

The protein belongs to the glucosamine/galactosamine-6-phosphate isomerase family. NagB subfamily.

The enzyme catalyses alpha-D-glucosamine 6-phosphate + H2O = beta-D-fructose 6-phosphate + NH4(+). Its pathway is amino-sugar metabolism; N-acetylneuraminate degradation; D-fructose 6-phosphate from N-acetylneuraminate: step 5/5. Catalyzes the reversible isomerization-deamination of glucosamine 6-phosphate (GlcN6P) to form fructose 6-phosphate (Fru6P) and ammonium ion. This Beutenbergia cavernae (strain ATCC BAA-8 / DSM 12333 / CCUG 43141 / JCM 11478 / NBRC 16432 / NCIMB 13614 / HKI 0122) protein is Glucosamine-6-phosphate deaminase.